We begin with the raw amino-acid sequence, 136 residues long: Small ribosomal subunit protein uS8c (136 aa).

Belongs to the universal ribosomal protein uS8 family. As to quaternary structure, part of the 30S ribosomal subunit.

It localises to the plastid. It is found in the chloroplast. Its function is as follows. One of the primary rRNA binding proteins, it binds directly to 16S rRNA central domain where it helps coordinate assembly of the platform of the 30S subunit. This is Small ribosomal subunit protein uS8c (rps8) from Oryza sativa subsp. indica (Rice).